The sequence spans 291 residues: Phytanoyl-CoA dioxygenase domain-containing protein 1 (291 aa).

Thr-55 carries the phosphothreonine modification. Residues Lys-102, Met-141, 156 to 158 (HQD), and Trp-174 contribute to the 2-oxoglutarate site. Positions 156 and 158 each coordinate Fe cation. His-246 provides a ligand contact to Fe cation. Residues Ser-248 and Arg-257 each contribute to the 2-oxoglutarate site.

Belongs to the PhyH family. PHYHD1 subfamily. Fe cation serves as cofactor.

2-oxoglutarate(2OG)-dependent dioxygenase that catalyzes the conversion of 2-oxoglutarate to succinate and CO(2) in an iron-dependent manner. However, does not couple 2OG turnover to the hydroxylation of acyl-coenzyme A derivatives, implying that it is not directly involved in phytanoyl coenzyme-A metabolism. Does not show detectable activity towards fatty acid CoA thioesters. The sequence is that of Phytanoyl-CoA dioxygenase domain-containing protein 1 (Phyhd1) from Rattus norvegicus (Rat).